A 243-amino-acid chain; its full sequence is 1-(5-phosphoribosyl)-5-[(5-phosphoribosylamino)methylideneamino] imidazole-4-carboxamide isomerase (243 aa).

Asp-10 acts as the Proton acceptor in catalysis. Residue Asp-131 is the Proton donor of the active site.

The protein belongs to the HisA/HisF family.

The protein localises to the cytoplasm. The enzyme catalyses 1-(5-phospho-beta-D-ribosyl)-5-[(5-phospho-beta-D-ribosylamino)methylideneamino]imidazole-4-carboxamide = 5-[(5-phospho-1-deoxy-D-ribulos-1-ylimino)methylamino]-1-(5-phospho-beta-D-ribosyl)imidazole-4-carboxamide. Its pathway is amino-acid biosynthesis; L-histidine biosynthesis; L-histidine from 5-phospho-alpha-D-ribose 1-diphosphate: step 4/9. The chain is 1-(5-phosphoribosyl)-5-[(5-phosphoribosylamino)methylideneamino] imidazole-4-carboxamide isomerase from Rhizorhabdus wittichii (strain DSM 6014 / CCUG 31198 / JCM 15750 / NBRC 105917 / EY 4224 / RW1) (Sphingomonas wittichii).